Here is a 505-residue protein sequence, read N- to C-terminus: Alpha-1-syntrophin (505 aa).

The disordered stretch occupies residues 1–77 (MASGRRAPRT…AEPGAASPPL (77 aa)). PH domains follow at residues 6–269 (RAPR…AQVN) and 293–401 (DIKR…DGCH). The region spanning 87 to 170 (RVTVRKADAG…EVVLEVKYMK (84 aa)) is the PDZ domain. Phosphoserine is present on residues Ser101, Ser184, Ser189, Ser193, and Ser200. The segment at 180–211 (ASGTSVGWDSPPASPLQRQPSSPGPPPRDLRD) is disordered. Positions 449-505 (PFEKLQMSSDDGASLLFLDFGGAEGEIQLDLHSCPKTMVFIIHSFLSAKVTRLGLLA) constitute an SU domain. The interval 483–505 (PKTMVFIIHSFLSAKVTRLGLLA) is calmodulin-binding.

The protein belongs to the syntrophin family. As to quaternary structure, monomer and homodimer. Interacts with the dystrophin related protein DTNA; SGCG of the dystrophin glycoprotein complex; NOS1; GRB2; GA; TGFA; MAPK12 and the sodium channel proteins SCN4A and SCN5A. Interacts with the dystrophin protein DMD in a calmodulin dependent manner and with related protein UTRN; SGCA of the dystrophin glycoprotein complex; F-actin; calmodulin and with the other members of the syntrophin family SNTB1 and SNTB2. Interacts with MYOC; regulates muscle hypertrophy. Interacts with DTNB. In terms of processing, phosphorylated by CaM-kinase II. Phosphorylation may inhibit the interaction with DMD.

The protein localises to the cell membrane. Its subcellular location is the sarcolemma. It localises to the cell junction. The protein resides in the cytoplasm. It is found in the cytoskeleton. Adapter protein that binds to and probably organizes the subcellular localization of a variety of membrane proteins. May link various receptors to the actin cytoskeleton and the extracellular matrix via the dystrophin glycoprotein complex. Plays an important role in synapse formation and in the organization of UTRN and acetylcholine receptors at the neuromuscular synapse. Binds to phosphatidylinositol 4,5-bisphosphate. The chain is Alpha-1-syntrophin (SNTA1) from Bos taurus (Bovine).